Reading from the N-terminus, the 77-residue chain is MKTSVLLVILGIAAITVQCTASESVEQDSLRTFVDAVLGWNAEMASEARCGGWMAKCADSDDCCEAFHCTRFNVCGK.

The N-terminal stretch at M1–A21 is a signal peptide. The propeptide occupies S22–R49. 3 cysteine pairs are disulfide-bonded: C50–C64, C57–C69, and C63–C75.

The protein belongs to the neurotoxin 10 (Hwtx-1) family. 65 (Jztx-21) subfamily. In terms of tissue distribution, expressed by the venom gland.

It localises to the secreted. Its function is as follows. Probable ion channel inhibitor. In Chilobrachys guangxiensis (Chinese earth tiger tarantula), this protein is U14-theraphotoxin-Cg1b.